The sequence spans 356 residues: Poly(rC)-binding protein 1 (356 aa).

M1 carries the post-translational modification N-acetylmethionine. KH domains follow at residues 13–75 (TLTI…FAMI) and 97–162 (PVTL…VKQI). K115 is covalently cross-linked (Glycyl lysine isopeptide (Lys-Gly) (interchain with G-Cter in SUMO2)). Residues S173, S189, S190, S246, S264, and S273 each carry the phosphoserine modification. Positions 279 to 343 (QTTHELTIPN…ASISLAQYLI (65 aa)) constitute a KH 3 domain.

Post-translationally, phosphorylated; lowers poly(rC)-binding activity.

The protein resides in the nucleus. It is found in the cytoplasm. In terms of biological role, single-stranded nucleic acid binding protein that binds preferentially to oligo dC. Together with PCBP2, required for erythropoiesis, possibly by regulating mRNA splicing. In Bos taurus (Bovine), this protein is Poly(rC)-binding protein 1 (PCBP1).